The sequence spans 391 residues: MERAIRNFLSQESAGGILLMVSVVLAMILANSPLSGMYHGFLETEMQVRVGNLDIDKTLIHWINDGLMAIFFMLIGLEVKRELLEGALSSRAQASLPTFAAIGGMVFPAAVYLIFNYSDPITQVGWAIPAATDIAFALGIMALLGSRVPVALKVFLLALAIIDDLGVVVIIALFYSTDLSTISLIIAAAAILGLIGLNRKGVTSLAPYGVVGLILWIAVLKSGVHATLAGVIIAFCIPLRAKDGSSPSESLEHSLHPWSTFIILPIFAFANAGVDLSGMSLSSLLSPVPLGIALGLLVGKPLGIMLFSYIAVKLKLAVLPEGMGWRHITPVAVMCGIGFTMSMFISSLAFVGEGQMYGDYARLGILLGSIASATIGYFWLSKVLPEKGAKA.

Helical transmembrane passes span alanine 14–leucine 34, leucine 59–valine 79, serine 95–phenylalanine 115, valine 124–leucine 144, valine 154–phenylalanine 174, threonine 177–leucine 197, leucine 213–isoleucine 233, phenylalanine 261–leucine 281, isoleucine 292–valine 312, valine 331–valine 351, and leucine 363–valine 383.

It belongs to the NhaA Na(+)/H(+) (TC 2.A.33) antiporter family.

The protein localises to the cell inner membrane. The enzyme catalyses Na(+)(in) + 2 H(+)(out) = Na(+)(out) + 2 H(+)(in). Its function is as follows. Na(+)/H(+) antiporter that extrudes sodium in exchange for external protons. This chain is Na(+)/H(+) antiporter NhaA, found in Shewanella pealeana (strain ATCC 700345 / ANG-SQ1).